The primary structure comprises 396 residues: Peptide chain release factor 1, mitochondrial (396 aa).

Gln-268 is modified (N5-methylglutamine). The tract at residues 317–340 (LEKEEKERNARKDQVSTTDRSDKI) is disordered.

Belongs to the prokaryotic/mitochondrial release factor family. In terms of processing, methylation of glutamine in the GGQ triplet is conserved from bacteria to mammals.

It is found in the mitochondrion. Its function is as follows. Mitochondrial peptide chain release factor that directs the termination of translation in response to the peptide chain termination codons UAA and UAG. The polypeptide is Peptide chain release factor 1, mitochondrial (MRF1) (Kluyveromyces lactis (strain ATCC 8585 / CBS 2359 / DSM 70799 / NBRC 1267 / NRRL Y-1140 / WM37) (Yeast)).